We begin with the raw amino-acid sequence, 158 residues long: MGQFTVVSLGLLAMFLSLSGAKGDNCPASWISRNGVCNKLFPDRKTWLEAEMYCRALKPGCHLASLHRDSDSTVLAWYISDHFKGAGHVWIGLRDTNRKRTWKWSDRTSTNYFSWNQGEPNNVQDDENCVHLWAPSGYLKWNDEPCASLHPFICQYKL.

A signal peptide spans 1 to 23 (MGQFTVVSLGLLAMFLSLSGAKG). 3 cysteine pairs are disulfide-bonded: C26/C37, C54/C154, and C129/C146. Positions 33 to 155 (RNGVCNKLFP…CASLHPFICQ (123 aa)) constitute a C-type lectin domain. The Mannose-binding signature appears at 119-121 (EPN). Residues E127, N142, and D143 each coordinate Ca(2+).

The protein belongs to the true venom lectin family. As to expression, expressed by the venom gland.

The protein localises to the secreted. Its function is as follows. Mannose-binding lectin which recognizes specific carbohydrate structures and agglutinates a variety of animal cells by binding to cell-surface glycoproteins and glycolipids. May be a calcium-dependent lectin. The sequence is that of C-type lectin lectoxin-Enh4 from Pseudoferania polylepis (Macleay's water snake).